The sequence spans 388 residues: Chaperone protein DnaJ (388 aa).

One can recognise a J domain in the interval 5–70; sequence DYYEVLGVAR…QKRAAYDRFG (66 aa). The segment at 141-219 adopts a CR-type zinc-finger fold; it reads GKTETIRLPT…CGGAGRVTRE (79 aa). Zn(2+) is bound by residues Cys-154, Cys-157, Cys-171, Cys-174, Cys-193, Cys-196, Cys-207, and Cys-210. CXXCXGXG motif repeat units follow at residues 154–161, 171–178, 193–200, and 207–214; these read CEVCAGSG, CPTCGGYG, CPNCHGRG, and CTACGGAG.

It belongs to the DnaJ family. As to quaternary structure, homodimer. It depends on Zn(2+) as a cofactor.

It localises to the cytoplasm. Participates actively in the response to hyperosmotic and heat shock by preventing the aggregation of stress-denatured proteins and by disaggregating proteins, also in an autonomous, DnaK-independent fashion. Unfolded proteins bind initially to DnaJ; upon interaction with the DnaJ-bound protein, DnaK hydrolyzes its bound ATP, resulting in the formation of a stable complex. GrpE releases ADP from DnaK; ATP binding to DnaK triggers the release of the substrate protein, thus completing the reaction cycle. Several rounds of ATP-dependent interactions between DnaJ, DnaK and GrpE are required for fully efficient folding. Also involved, together with DnaK and GrpE, in the DNA replication of plasmids through activation of initiation proteins. In Methylobacterium nodulans (strain LMG 21967 / CNCM I-2342 / ORS 2060), this protein is Chaperone protein DnaJ.